The primary structure comprises 139 residues: Large ribosomal subunit protein bL17 (139 aa).

The segment at Asp117 to Gly139 is disordered.

The protein belongs to the bacterial ribosomal protein bL17 family. As to quaternary structure, part of the 50S ribosomal subunit. Contacts protein L32.

The sequence is that of Large ribosomal subunit protein bL17 from Rhodospirillum centenum (strain ATCC 51521 / SW).